A 286-amino-acid polypeptide reads, in one-letter code: Energy-coupling factor transporter ATP-binding protein EcfA2 (286 aa).

One can recognise an ABC transporter domain in the interval 3 to 246 (IRFDNVSYTY…KKKLADWHIG (244 aa)). An ATP-binding site is contributed by 40 to 47 (GQTGSGKS).

The protein belongs to the ABC transporter superfamily. Energy-coupling factor EcfA family. In terms of assembly, forms a stable energy-coupling factor (ECF) transporter complex composed of 2 membrane-embedded substrate-binding proteins (S component), 2 ATP-binding proteins (A component) and 2 transmembrane proteins (T component).

It is found in the cell membrane. ATP-binding (A) component of a common energy-coupling factor (ECF) ABC-transporter complex. Unlike classic ABC transporters this ECF transporter provides the energy necessary to transport a number of different substrates. This is Energy-coupling factor transporter ATP-binding protein EcfA2 from Staphylococcus aureus (strain USA300).